A 295-amino-acid chain; its full sequence is Glutamyl-Q tRNA(Asp) synthetase (295 aa).

L-glutamate is bound by residues 9–13 (RFAPT) and glutamate 45. A 'HIGH' region motif is present at residues 12 to 22 (PTPSGFLHFGS). Positions 101, 103, 115, and 119 each coordinate Zn(2+). The L-glutamate site is built by tyrosine 172 and arginine 190. The 'KMSKS' region motif lies at 228 to 232 (KLGKS). Lysine 231 is a binding site for ATP.

Belongs to the class-I aminoacyl-tRNA synthetase family. GluQ subfamily. Zn(2+) is required as a cofactor.

Functionally, catalyzes the tRNA-independent activation of glutamate in presence of ATP and the subsequent transfer of glutamate onto a tRNA(Asp). Glutamate is transferred on the 2-amino-5-(4,5-dihydroxy-2-cyclopenten-1-yl) moiety of the queuosine in the wobble position of the QUC anticodon. This chain is Glutamyl-Q tRNA(Asp) synthetase, found in Pseudomonas putida (strain W619).